The chain runs to 110 residues: DNA-directed RNA polymerase subunit omega (110 aa).

This sequence belongs to the RNA polymerase subunit omega family. In terms of assembly, the RNAP catalytic core consists of 2 alpha, 1 beta, 1 beta' and 1 omega subunit. When a sigma factor is associated with the core the holoenzyme is formed, which can initiate transcription.

It catalyses the reaction RNA(n) + a ribonucleoside 5'-triphosphate = RNA(n+1) + diphosphate. Its function is as follows. Promotes RNA polymerase assembly. Latches the N- and C-terminal regions of the beta' subunit thereby facilitating its interaction with the beta and alpha subunits. The protein is DNA-directed RNA polymerase subunit omega of Vesicomyosocius okutanii subsp. Calyptogena okutanii (strain HA).